A 67-amino-acid polypeptide reads, in one-letter code: UPF0437 protein y4xE (67 aa).

This sequence belongs to the UPF0437 family.

The sequence is that of UPF0437 protein y4xE from Sinorhizobium fredii (strain NBRC 101917 / NGR234).